We begin with the raw amino-acid sequence, 431 residues long: MIERYSRDEMSSIWTDQNRYEAWLEVEILACEAWSELGYIPKEDVKKIRENAKVNVERAKEIEQETRHDVVAFTRQVSETLGDERKWVHYGLTSTDVVDTALSYVIKQANEILEKDLERFIDVLAAKAKKYQYTLMMGRTHGVHAEPTTFGVKMALWYTEMKRNLKRFKEVRKEIEVGKMSGAVGTFANIPPEIEAYVCEHLGIDTAAVSTQTLQRDRHAYYIATLALIATSMEKFAVEIRNLQKTETREVEEAFAKGQKGSSAMPHKRNPIGSENITGISRVIRGYITTAYENIPLWHERDISHSSAERIMLPDVTIALDYALNRFTNIVDRLTVYEDNMRNNIDKTYGLIFSQRVLLALINKGMVREEAYDKVQPKAMESWETKTPFRELIEQDSSITDVLSSEELDDCFDPKHHLNQVDTIFARAGLS.

Residues 4-5 (RY), 67-69 (RHD), and 93-94 (TS) contribute to the N(6)-(1,2-dicarboxyethyl)-AMP site. The Proton donor/acceptor role is filled by His-141. Gln-212 serves as a coordination point for N(6)-(1,2-dicarboxyethyl)-AMP. Ser-262 functions as the Proton donor/acceptor in the catalytic mechanism. N(6)-(1,2-dicarboxyethyl)-AMP is bound by residues Ser-263, 268 to 270 (KRN), Asn-276, and 307 to 311 (SAERI).

It belongs to the lyase 1 family. Adenylosuccinate lyase subfamily. As to quaternary structure, homodimer and homotetramer. Residues from neighboring subunits contribute catalytic and substrate-binding residues to each active site.

The enzyme catalyses N(6)-(1,2-dicarboxyethyl)-AMP = fumarate + AMP. It carries out the reaction (2S)-2-[5-amino-1-(5-phospho-beta-D-ribosyl)imidazole-4-carboxamido]succinate = 5-amino-1-(5-phospho-beta-D-ribosyl)imidazole-4-carboxamide + fumarate. It functions in the pathway purine metabolism; AMP biosynthesis via de novo pathway; AMP from IMP: step 2/2. The protein operates within purine metabolism; IMP biosynthesis via de novo pathway; 5-amino-1-(5-phospho-D-ribosyl)imidazole-4-carboxamide from 5-amino-1-(5-phospho-D-ribosyl)imidazole-4-carboxylate: step 2/2. Functionally, catalyzes two reactions in de novo purine nucleotide biosynthesis. Catalyzes the breakdown of 5-aminoimidazole- (N-succinylocarboxamide) ribotide (SAICAR or 2-[5-amino-1-(5-phospho-beta-D-ribosyl)imidazole-4-carboxamido]succinate) to 5-aminoimidazole-4-carboxamide ribotide (AICAR or 5-amino-1-(5-phospho-beta-D-ribosyl)imidazole-4-carboxamide) and fumarate, and of adenylosuccinate (ADS or N(6)-(1,2-dicarboxyethyl)-AMP) to adenosine monophosphate (AMP) and fumarate. The protein is Adenylosuccinate lyase (purB) of Staphylococcus epidermidis (strain ATCC 35984 / DSM 28319 / BCRC 17069 / CCUG 31568 / BM 3577 / RP62A).